A 30-amino-acid chain; its full sequence is Alpha-defensin PhD-4 (30 aa).

Intrachain disulfides connect cysteine 2–cysteine 30, cysteine 4–cysteine 19, and cysteine 9–cysteine 29.

The protein localises to the secreted. In terms of biological role, in low salt conditions, has antibacterial activity against the Gram-negative bacterium E.coli ML35p (MIC=2.4 uM), the Gram-positive bacteria L.monocytogenes EGD (MIC=2.2 uM) and methicillin-resistant S.aureus ATCC 33591 (MIC=3.5 uM), and the fungus C.albicans 820 (MIC=3.9 uM). At high physiological salt concentrations the antimicrobial activity decreases significantly: E.coli ML35p (MIC=7.1 uM), L.monocytogenes EGD (MIC=1.8 uM), S.aureus ATCC 33591 (MIC=&gt;50 uM), and C.albicans 820 (MIC=&gt;50 uM). The sequence is that of Alpha-defensin PhD-4 from Papio hamadryas (Hamadryas baboon).